The following is a 577-amino-acid chain: 2-succinyl-5-enolpyruvyl-6-hydroxy-3-cyclohexene-1-carboxylate synthase (577 aa).

This sequence belongs to the TPP enzyme family. MenD subfamily. As to quaternary structure, homodimer. Mg(2+) is required as a cofactor. The cofactor is Mn(2+). Thiamine diphosphate serves as cofactor.

The enzyme catalyses isochorismate + 2-oxoglutarate + H(+) = 5-enolpyruvoyl-6-hydroxy-2-succinyl-cyclohex-3-ene-1-carboxylate + CO2. Its pathway is quinol/quinone metabolism; 1,4-dihydroxy-2-naphthoate biosynthesis; 1,4-dihydroxy-2-naphthoate from chorismate: step 2/7. It participates in quinol/quinone metabolism; menaquinone biosynthesis. Functionally, catalyzes the thiamine diphosphate-dependent decarboxylation of 2-oxoglutarate and the subsequent addition of the resulting succinic semialdehyde-thiamine pyrophosphate anion to isochorismate to yield 2-succinyl-5-enolpyruvyl-6-hydroxy-3-cyclohexene-1-carboxylate (SEPHCHC). The chain is 2-succinyl-5-enolpyruvyl-6-hydroxy-3-cyclohexene-1-carboxylate synthase from Geobacillus kaustophilus (strain HTA426).